The sequence spans 238 residues: Large ribosomal subunit protein uL1 (238 aa).

This sequence belongs to the universal ribosomal protein uL1 family. As to quaternary structure, part of the 50S ribosomal subunit.

Its function is as follows. Binds directly to 23S rRNA. The L1 stalk is quite mobile in the ribosome, and is involved in E site tRNA release. Functionally, protein L1 is also a translational repressor protein, it controls the translation of the L11 operon by binding to its mRNA. The sequence is that of Large ribosomal subunit protein uL1 from Nostoc sp. (strain PCC 7120 / SAG 25.82 / UTEX 2576).